Here is a 408-residue protein sequence, read N- to C-terminus: Histidine--tRNA ligase (408 aa).

Belongs to the class-II aminoacyl-tRNA synthetase family. As to quaternary structure, homodimer.

The protein resides in the cytoplasm. The enzyme catalyses tRNA(His) + L-histidine + ATP = L-histidyl-tRNA(His) + AMP + diphosphate + H(+). The sequence is that of Histidine--tRNA ligase from Campylobacter jejuni subsp. jejuni serotype O:6 (strain 81116 / NCTC 11828).